The primary structure comprises 55 residues: Large ribosomal subunit protein bL33 (55 aa).

Belongs to the bacterial ribosomal protein bL33 family.

This Hyphomonas neptunium (strain ATCC 15444) protein is Large ribosomal subunit protein bL33.